Reading from the N-terminus, the 320-residue chain is o-succinylbenzoate synthase (320 aa).

The Proton donor role is filled by lysine 133. Aspartate 161, glutamate 190, and aspartate 213 together coordinate Mg(2+). Catalysis depends on lysine 235, which acts as the Proton acceptor.

It belongs to the mandelate racemase/muconate lactonizing enzyme family. MenC type 1 subfamily. A divalent metal cation serves as cofactor.

The catalysed reaction is (1R,6R)-6-hydroxy-2-succinyl-cyclohexa-2,4-diene-1-carboxylate = 2-succinylbenzoate + H2O. Its pathway is quinol/quinone metabolism; 1,4-dihydroxy-2-naphthoate biosynthesis; 1,4-dihydroxy-2-naphthoate from chorismate: step 4/7. It functions in the pathway quinol/quinone metabolism; menaquinone biosynthesis. In terms of biological role, converts 2-succinyl-6-hydroxy-2,4-cyclohexadiene-1-carboxylate (SHCHC) to 2-succinylbenzoate (OSB). The chain is o-succinylbenzoate synthase from Escherichia coli O6:K15:H31 (strain 536 / UPEC).